The sequence spans 219 residues: GPI ethanolamine phosphate transferase, stabilizing subunit (219 aa).

6 helical membrane passes run 11-31 (YTNL…SFFV), 42-62 (TWLC…YLVV), 86-106 (CFLM…APLI), 113-133 (FLFA…LLGP), 155-175 (LQIT…PIPL), and 189-209 (TLGA…WIYW).

The protein belongs to the PIGF family. As to quaternary structure, part of the ethanolamine phosphate transferase 3 complex composed by PIGO and PIGF. Part of the ethanolamine phosphate transferase 2 complex with PIGG. PIGF is required to stabilize PIGG and PIGO.

It is found in the endoplasmic reticulum membrane. It participates in glycolipid biosynthesis; glycosylphosphatidylinositol-anchor biosynthesis. Functionally, stabilizing subunit of the ethanolamine phosphate transferase 3 and ethanolamine phosphate transferase 2 complexes that sequentially transfer an ethanolamine phosphate (EtNP) from a phosphatidylethanolamine (PE) to the 6-OH position of the third alpha-1,2-linked mannose and the second alpha-1,6-linked mannose of the alpha-D-Man-(1-&gt;2)-alpha-D-Man-(1-&gt;6)-2-PEtn-alpha-D-Man-(1-&gt;4)-alpha-D-GlcN-(1-&gt;6)-(1-radyl,2-acyl-sn-glycero-3-phospho)-2-acyl-inositol (also termed H6) intermediate to generate a 6-PEtn-alpha-D-Man-(1-&gt;2)-6-PEtn-alpha-D-Man-(1-&gt;6)-2-PEtn-alpha-D-Man-(1-&gt;4)-alpha-D-GlcN-(1-&gt;6)-(1-radyl,2-acyl-sn-glycero-3-phospho)-2-acyl-inositol (also termed H8). Participates in the tenth and eleventh steps of the glycosylphosphatidylinositol-anchor biosynthesis, in association with PIGO and PIGG, respectively. In Mus musculus (Mouse), this protein is GPI ethanolamine phosphate transferase, stabilizing subunit.